A 2464-amino-acid chain; its full sequence is Nonribosomal peptide synthetase NPS2 (2464 aa).

The tract at residues 275 to 670 is adenylation 1; it reads DDHHPGTSQP…GRIDTQIKLR (396 aa). A Carrier 1 domain is found at 814–888; it reads TKAEGQLLEI…QIAKALDASS (75 aa). Ser-848 carries the O-(pantetheine 4'-phosphoryl)serine modification. Positions 924 to 1325 are condensation 1; the sequence is IYPPFPLQEG…EGLALDLAQG (402 aa). The Carrier 2 domain maps to 1364–1437; the sequence is EDLLLRLRKI…RMAASAGKKI (74 aa). O-(pantetheine 4'-phosphoryl)serine is present on Ser-1398. Residues 1479–1887 are condensation 2; that stretch reads DVFPVTTLQA…LRVLVDDLDA (409 aa). The region spanning 1917 to 1993 is the Carrier 3 domain; it reads SSWDEKSSTL…DLVMRAGAED (77 aa). An O-(pantetheine 4'-phosphoryl)serine modification is found at Ser-1954. The tract at residues 2047–2340 is condensation 3; the sequence is GGSRYQHVFG…ATQIQDDLRE (294 aa).

The protein belongs to the NRP synthetase family.

It participates in siderophore biosynthesis. In terms of biological role, nonribosomal peptide synthetase; part of the siderophore basidioferrin biosynthetic pathway. The biosynthesis of basidioferrin depends on the hydroxylation of ornithine to N(5)-hydroxyornithine, catalyzed by the monooxygenase SMO1. The second step, the acylation of N(5)-hydroxy-L-ornithine is catalyzed by a not yet identified N-acyltransferase. Finally, assembly of basidioferrin is catalyzed by the nonribosomal peptide synthase (NRPS) NPS2 via amide bond formation between three L-AHO molecules to release the linear L-AHO trimer. N-5-acetyl-N-5-hydroxy-L-ornithine (L-AHO) and N-5-cis-anhydromevalonyl-N-5-hydroxy-L-ornithine (L-AMHO) are accepted as the substrates by the NPS2 adenylation (A) domain, but only L-AHO is trimerized. This Ceriporiopsis subvermispora (strain B) (White-rot fungus) protein is Nonribosomal peptide synthetase NPS2.